The following is a 159-amino-acid chain: 2-C-methyl-D-erythritol 2,4-cyclodiphosphate synthase (159 aa).

A divalent metal cation-binding residues include Asp-10 and His-12. Residues 10-12 (DVH) and 36-37 (HS) each bind 4-CDP-2-C-methyl-D-erythritol 2-phosphate. Residue His-44 coordinates a divalent metal cation. 4-CDP-2-C-methyl-D-erythritol 2-phosphate contacts are provided by residues 58 to 60 (DIG), 63 to 67 (FPDTD), 102 to 108 (AQAPKMA), 134 to 137 (TTTE), Phe-141, and Arg-144.

Belongs to the IspF family. In terms of assembly, homotrimer. Requires a divalent metal cation as cofactor.

The catalysed reaction is 4-CDP-2-C-methyl-D-erythritol 2-phosphate = 2-C-methyl-D-erythritol 2,4-cyclic diphosphate + CMP. It participates in isoprenoid biosynthesis; isopentenyl diphosphate biosynthesis via DXP pathway; isopentenyl diphosphate from 1-deoxy-D-xylulose 5-phosphate: step 4/6. Involved in the biosynthesis of isopentenyl diphosphate (IPP) and dimethylallyl diphosphate (DMAPP), two major building blocks of isoprenoid compounds. Catalyzes the conversion of 4-diphosphocytidyl-2-C-methyl-D-erythritol 2-phosphate (CDP-ME2P) to 2-C-methyl-D-erythritol 2,4-cyclodiphosphate (ME-CPP) with a corresponding release of cytidine 5-monophosphate (CMP). This is 2-C-methyl-D-erythritol 2,4-cyclodiphosphate synthase from Shewanella piezotolerans (strain WP3 / JCM 13877).